Here is a 290-residue protein sequence, read N- to C-terminus: S-adenosylmethionine-dependent nucleotide dehydratase (290 aa).

In terms of domain architecture, Radical SAM core spans 6-226 (SGNNIIPSVN…VNRHSKNKFL (221 aa)). [4Fe-4S] cluster is bound by residues Cys-22, Cys-26, and Cys-29.

It belongs to the radical SAM superfamily. Viperin family. Requires [4Fe-4S] cluster as cofactor.

It carries out the reaction UTP + AH2 + S-adenosyl-L-methionine = 3'-deoxy-3',4'-didehydro-UTP + 5'-deoxyadenosine + L-methionine + A + H2O + H(+). Its function is as follows. Expression of pVip47 in E.coli (strain MG1655) confers resistance to phage P1; has no effect against T7. Catalyzes the conversion of uridine triphosphate (UTP) to 3'-deoxy-3',4'-didehydro-UTP (ddhUTP), probably via a SAM-dependent radical mechanism. The modified nucleotide represses transcription from T7 RNA polymerase-directed genes (possibly by acting as chain terminators), strongly suggesting these nucleotides block viral polymerase transcription. How this protein allows bacteria to resist viruses that do not encode their own RNA polymerase (such as lambda, P1) is unknown. This is S-adenosylmethionine-dependent nucleotide dehydratase from Flammeovirga pacifica.